A 308-amino-acid chain; its full sequence is Acetylglutamate kinase (308 aa).

Substrate-binding positions include glycine 86 to glycine 87, arginine 108, and asparagine 201.

It belongs to the acetylglutamate kinase family. ArgB subfamily.

The protein resides in the cytoplasm. It catalyses the reaction N-acetyl-L-glutamate + ATP = N-acetyl-L-glutamyl 5-phosphate + ADP. It participates in amino-acid biosynthesis; L-arginine biosynthesis; N(2)-acetyl-L-ornithine from L-glutamate: step 2/4. In terms of biological role, catalyzes the ATP-dependent phosphorylation of N-acetyl-L-glutamate. This Prochlorococcus marinus (strain MIT 9303) protein is Acetylglutamate kinase.